The sequence spans 130 residues: Small ribosomal subunit protein uS9 (130 aa).

Belongs to the universal ribosomal protein uS9 family.

This Syntrophobacter fumaroxidans (strain DSM 10017 / MPOB) protein is Small ribosomal subunit protein uS9.